Consider the following 892-residue polypeptide: Protein argonaute 11 (892 aa).

Residues 1 to 17 are compositionally biased toward gly residues; that stretch reads MSSRGGGVGGRRGGPGG. 2 disordered regions span residues 1–68 and 86–117; these read MSSR…ALQP and MEAR…GALP. The segment covering 86-107 has biased composition (low complexity); sequence MEAREGASSSSSASAPAVGEVE. One can recognise a PAZ domain in the interval 248–362; it reads SLKQFLAGTY…LPMEVCRIVK (115 aa). A Piwi domain is found at 541 to 848; that stretch reads LLVIVLPDAN…AASRARHYLE (308 aa). A disordered region spans residues 850–876; sequence GSLPDHGSSSASAAGGSRRNDRGVPVK. Residues 856–866 are compositionally biased toward low complexity; sequence GSSSASAAGGS. Positions 867 to 876 are enriched in basic and acidic residues; that stretch reads RRNDRGVPVK.

The protein belongs to the argonaute family. Ago subfamily.

Functionally, probably involved in the RNA silencing pathway. May bind to short RNAs such as microRNAs (miRNAs) or short interfering RNAs (siRNAs), and represses the translation of mRNAs which are complementary to them. The protein is Protein argonaute 11 (AGO11) of Oryza sativa subsp. japonica (Rice).